The chain runs to 542 residues: Peptide chain release factor 3 (542 aa).

Positions 14 to 283 (ERRRNFAIIS…AFLDYALKPA (270 aa)) constitute a tr-type G domain. Residues 23–30 (SHPDAGKT), 91–95 (DTPGH), and 145–148 (NKLD) contribute to the GTP site.

This sequence belongs to the TRAFAC class translation factor GTPase superfamily. Classic translation factor GTPase family. PrfC subfamily.

The protein localises to the cytoplasm. In terms of biological role, increases the formation of ribosomal termination complexes and stimulates activities of RF-1 and RF-2. It binds guanine nucleotides and has strong preference for UGA stop codons. It may interact directly with the ribosome. The stimulation of RF-1 and RF-2 is significantly reduced by GTP and GDP, but not by GMP. The chain is Peptide chain release factor 3 from Cyanothece sp. (strain PCC 7425 / ATCC 29141).